Reading from the N-terminus, the 305-residue chain is UDP-3-O-acyl-N-acetylglucosamine deacetylase (305 aa).

Positions 79, 238, and 242 each coordinate Zn(2+). Residue histidine 265 is the Proton donor of the active site.

It belongs to the LpxC family. Zn(2+) serves as cofactor.

It catalyses the reaction a UDP-3-O-[(3R)-3-hydroxyacyl]-N-acetyl-alpha-D-glucosamine + H2O = a UDP-3-O-[(3R)-3-hydroxyacyl]-alpha-D-glucosamine + acetate. It functions in the pathway glycolipid biosynthesis; lipid IV(A) biosynthesis; lipid IV(A) from (3R)-3-hydroxytetradecanoyl-[acyl-carrier-protein] and UDP-N-acetyl-alpha-D-glucosamine: step 2/6. Functionally, catalyzes the hydrolysis of UDP-3-O-myristoyl-N-acetylglucosamine to form UDP-3-O-myristoylglucosamine and acetate, the committed step in lipid A biosynthesis. The polypeptide is UDP-3-O-acyl-N-acetylglucosamine deacetylase (Shewanella woodyi (strain ATCC 51908 / MS32)).